The chain runs to 556 residues: ATP synthase subunit beta-1, mitochondrial (556 aa).

The segment covering 1 to 20 (MASRRVLSSLLRSSSGRSAA) has biased composition (low complexity). The tract at residues 1–37 (MASRRVLSSLLRSSSGRSAAKLGNRNPRLPSPSPARH) is disordered. The transit peptide at 1 to 51 (MASRRVLSSLLRSSSGRSAAKLGNRNPRLPSPSPARHAAPCSYLLGRVAEY) directs the protein to the mitochondrion. Ser59 is subject to Phosphoserine. ATP is bound at residue 231-238 (GGAGVGKT).

Belongs to the ATPase alpha/beta chains family. F-type ATPases have 2 components, CF(1) - the catalytic core - and CF(0) - the membrane proton channel. CF(1) has five subunits: alpha(3), beta(3), gamma(1), delta(1), epsilon(1). CF(0) has three main subunits: a, b and c.

The protein resides in the mitochondrion. It localises to the mitochondrion inner membrane. It carries out the reaction ATP + H2O + 4 H(+)(in) = ADP + phosphate + 5 H(+)(out). Its function is as follows. Mitochondrial membrane ATP synthase (F(1)F(0) ATP synthase or Complex V) produces ATP from ADP in the presence of a proton gradient across the membrane which is generated by electron transport complexes of the respiratory chain. F-type ATPases consist of two structural domains, F(1) - containing the extramembraneous catalytic core, and F(0) - containing the membrane proton channel, linked together by a central stalk and a peripheral stalk. During catalysis, ATP synthesis in the catalytic domain of F(1) is coupled via a rotary mechanism of the central stalk subunits to proton translocation. Subunits alpha and beta form the catalytic core in F(1). Rotation of the central stalk against the surrounding alpha(3)beta(3) subunits leads to hydrolysis of ATP in three separate catalytic sites on the beta subunits. The protein is ATP synthase subunit beta-1, mitochondrial of Arabidopsis thaliana (Mouse-ear cress).